Here is a 313-residue protein sequence, read N- to C-terminus: Ribosomal RNA small subunit methyltransferase H (313 aa).

S-adenosyl-L-methionine contacts are provided by residues 35–37 (GGH), aspartate 55, phenylalanine 79, aspartate 101, and glutamine 108.

The protein belongs to the methyltransferase superfamily. RsmH family.

Its subcellular location is the cytoplasm. It carries out the reaction cytidine(1402) in 16S rRNA + S-adenosyl-L-methionine = N(4)-methylcytidine(1402) in 16S rRNA + S-adenosyl-L-homocysteine + H(+). In terms of biological role, specifically methylates the N4 position of cytidine in position 1402 (C1402) of 16S rRNA. The sequence is that of Ribosomal RNA small subunit methyltransferase H from Shigella flexneri.